The following is a 313-amino-acid chain: MRRAPAFLSADEVQDHLRSSSLLIPPLEAALANFSKGPDGGVMQPVRTVVPVAKHRGFLGVMPAYSAAEDALTTKLVTFYEGHSNNAVPSHQASVLLFDPSNGSLLAVMDGNVITAKRTAAVSAIATKFLKPPGSDVLCILGAGVQAYSHYEIFTEQFSFKEVRMWNRTRENAEKFASSVQGDVRVCSSVQEAVTGADVIITVTMATEPILFGEWVKPGAHINAVGASRPDWRELDDELMKQAVLYVDSREAALKESGDVLLSGADIFAELGEVVSGAKPAYCEKTTVFKSLGMAVEDLVAAKLVYDSWSSGK.

A 3,3',5-triiodo-L-thyronine-binding site is contributed by Arg47. 13 residues coordinate NADPH: Ser90, His91, Arg118, Ala143, Val145, Gln146, Asn167, Arg168, Thr169, Asn172, Thr204, Met205, and Val225. Glu256 contacts 3,3',5-triiodo-L-thyronine. Ser291 is an NADPH binding site.

The protein belongs to the ornithine cyclodeaminase/mu-crystallin family. In terms of assembly, homodimer. Binds the thyroid hormone triiodothyronine (T3); T3 binding inhibits enzymatic activity.

The protein resides in the cytoplasm. The catalysed reaction is L-pipecolate + NADP(+) = Delta(1)-piperideine-2-carboxylate + NADPH + H(+). The enzyme catalyses L-pipecolate + NAD(+) = Delta(1)-piperideine-2-carboxylate + NADH + H(+). It catalyses the reaction L-proline + NADP(+) = 1-pyrroline-2-carboxylate + NADPH + H(+). It carries out the reaction L-proline + NAD(+) = 1-pyrroline-2-carboxylate + NADH + H(+). The catalysed reaction is (3R)-1,4-thiomorpholine-3-carboxylate + NAD(+) = 3,4-dehydrothiomorpholine-3-carboxylate + NADH + 2 H(+). The enzyme catalyses (3R)-1,4-thiomorpholine-3-carboxylate + NADP(+) = 3,4-dehydrothiomorpholine-3-carboxylate + NADPH + 2 H(+). It catalyses the reaction (S)-cystathionine ketimine + NADH + 2 H(+) = (3R,5S)-2,3,5,6,7-pentahydro-1,4-thiazepine-3,5-dicarboxylate + NAD(+). It carries out the reaction (S)-cystathionine ketimine + NADPH + 2 H(+) = (3R,5S)-2,3,5,6,7-pentahydro-1,4-thiazepine-3,5-dicarboxylate + NADP(+). The catalysed reaction is (R)-lanthionine ketimine + NADPH + 2 H(+) = (3R,5R)-1,4-thiomorpholine-3,5-dicarboxylate + NADP(+). The enzyme catalyses Delta(2)-thiazoline-2-carboxylate + NADPH + 2 H(+) = L-thiazolidine-2-carboxylate + NADP(+). Its function is as follows. Catalyzes the NAD(P)H-dependent reduction of imine double bonds of a number of cyclic ketimine substrates, including sulfur-containing cyclic ketimines. Under physiological conditions, it efficiently catalyzes delta(1)-piperideine-2-carboxylate (P2C) and delta(1)-pyrroline-2-carboxylate (Pyr2C) reduction, suggesting a central role in lysine and glutamate metabolism. Additional substrates are delta(2)-thiazoline-2-carboxylate (T2C), 3,4-dehydrothiomorpholine-3-carboxylate (AECK), and (R)-lanthionine ketimine (LK) that is reduced at very low rate compared to other substrates. Also catalyzes the NAD(P)H-dependent reduction of (S)-cystathionine ketimine (CysK). In Rattus norvegicus (Rat), this protein is Ketimine reductase mu-crystallin.